The sequence spans 237 residues: NAD(P)H-quinone oxidoreductase subunit K, chloroplastic (237 aa).

Residues cysteine 55, cysteine 56, cysteine 120, and cysteine 151 each coordinate [4Fe-4S] cluster.

This sequence belongs to the complex I 20 kDa subunit family. NDH is composed of at least 16 different subunits, 5 of which are encoded in the nucleus. Requires [4Fe-4S] cluster as cofactor.

It is found in the plastid. The protein localises to the chloroplast thylakoid membrane. It catalyses the reaction a plastoquinone + NADH + (n+1) H(+)(in) = a plastoquinol + NAD(+) + n H(+)(out). It carries out the reaction a plastoquinone + NADPH + (n+1) H(+)(in) = a plastoquinol + NADP(+) + n H(+)(out). NDH shuttles electrons from NAD(P)H:plastoquinone, via FMN and iron-sulfur (Fe-S) centers, to quinones in the photosynthetic chain and possibly in a chloroplast respiratory chain. The immediate electron acceptor for the enzyme in this species is believed to be plastoquinone. Couples the redox reaction to proton translocation, and thus conserves the redox energy in a proton gradient. The sequence is that of NAD(P)H-quinone oxidoreductase subunit K, chloroplastic from Nephroselmis olivacea (Green alga).